The primary structure comprises 1221 residues: DNA-directed RNA polymerase subunit beta (1221 aa).

Residues glutamate 1176–lysine 1221 form a disordered region. The span at glutamate 1183 to aspartate 1215 shows a compositional bias: acidic residues.

The protein belongs to the RNA polymerase beta chain family. The RNAP catalytic core consists of 2 alpha, 1 beta, 1 beta' and 1 omega subunit. When a sigma factor is associated with the core the holoenzyme is formed, which can initiate transcription.

The catalysed reaction is RNA(n) + a ribonucleoside 5'-triphosphate = RNA(n+1) + diphosphate. DNA-dependent RNA polymerase catalyzes the transcription of DNA into RNA using the four ribonucleoside triphosphates as substrates. This Lactobacillus delbrueckii subsp. bulgaricus (strain ATCC BAA-365 / Lb-18) protein is DNA-directed RNA polymerase subunit beta.